Here is a 444-residue protein sequence, read N- to C-terminus: 23S rRNA (uracil(1939)-C(5))-methyltransferase RlmD (444 aa).

One can recognise a TRAM domain in the interval 5 to 67; the sequence is RSRIDRTPFQ…RHFDEARTVE (63 aa). The [4Fe-4S] cluster site is built by Cys80, Cys86, Cys89, and Cys168. The S-adenosyl-L-methionine site is built by Gln276, Phe305, Asn310, Glu326, Asp353, and Asp374. The active-site Nucleophile is the Cys400.

Belongs to the class I-like SAM-binding methyltransferase superfamily. RNA M5U methyltransferase family. RlmD subfamily.

The enzyme catalyses uridine(1939) in 23S rRNA + S-adenosyl-L-methionine = 5-methyluridine(1939) in 23S rRNA + S-adenosyl-L-homocysteine + H(+). Catalyzes the formation of 5-methyl-uridine at position 1939 (m5U1939) in 23S rRNA. In Stenotrophomonas maltophilia (strain K279a), this protein is 23S rRNA (uracil(1939)-C(5))-methyltransferase RlmD.